The chain runs to 437 residues: Minor fimbrial subunit HifE (437 aa).

The N-terminal stretch at 1-30 is a signal peptide; it reads MNKKSYINHYLTLFKVTTLLFTLSSNPVWA.

This sequence belongs to the fimbrial protein family.

The protein localises to the fimbrium. Functionally, may be a minor structural protein required for pilus biogenesis. May be the adhesive component in the pili. In Haemophilus influenzae, this protein is Minor fimbrial subunit HifE (hifE).